Consider the following 240-residue polypeptide: Probable transcriptional regulatory protein A2cp1_1765 (240 aa).

The protein belongs to the TACO1 family.

It localises to the cytoplasm. This chain is Probable transcriptional regulatory protein A2cp1_1765, found in Anaeromyxobacter dehalogenans (strain 2CP-1 / ATCC BAA-258).